The sequence spans 257 residues: 5-oxoprolinase subunit A (257 aa).

This sequence belongs to the LamB/PxpA family. As to quaternary structure, forms a complex composed of PxpA, PxpB and PxpC.

It catalyses the reaction 5-oxo-L-proline + ATP + 2 H2O = L-glutamate + ADP + phosphate + H(+). In terms of biological role, catalyzes the cleavage of 5-oxoproline to form L-glutamate coupled to the hydrolysis of ATP to ADP and inorganic phosphate. In Pectobacterium atrosepticum (strain SCRI 1043 / ATCC BAA-672) (Erwinia carotovora subsp. atroseptica), this protein is 5-oxoprolinase subunit A.